The sequence spans 98 residues: Feather keratin 1 (98 aa).

The protein belongs to the avian keratin family. In terms of assembly, the avian keratins (F-ker, S-ker, C-ker and B-ker) are a complex mixture of very similar polypeptides.

This chain is Feather keratin 1, found in Gallus gallus (Chicken).